The chain runs to 229 residues: Protein fmp52-2, mitochondrial (229 aa).

A mitochondrion-targeting transit peptide spans 1-45; it reads MTTAAVFGSTGAVGGQILATLLASDAFSSVKTVSRRLPNAQSPKL.

This sequence belongs to the FMP52 family.

The protein resides in the mitochondrion outer membrane. The sequence is that of Protein fmp52-2, mitochondrial (fmp522) from Aspergillus oryzae (strain ATCC 42149 / RIB 40) (Yellow koji mold).